We begin with the raw amino-acid sequence, 309 residues long: Peptide methionine sulfoxide reductase MsrA/MsrB (309 aa).

The peptide methionine sulfoxide reductase A stretch occupies residues 1-153; sequence MIYLAEGCFW…PNGYCHIDIN (153 aa). Residue cysteine 8 is part of the active site. The 124-residue stretch at 170 to 293 folds into the MsrB domain; the sequence is ATEIKAKLSA…NSLSITFIPK (124 aa). Cysteine 282 acts as the Nucleophile in catalysis.

It in the N-terminal section; belongs to the MsrA Met sulfoxide reductase family. This sequence in the C-terminal section; belongs to the MsrB Met sulfoxide reductase family.

The catalysed reaction is L-methionyl-[protein] + [thioredoxin]-disulfide + H2O = L-methionyl-(S)-S-oxide-[protein] + [thioredoxin]-dithiol. The enzyme catalyses [thioredoxin]-disulfide + L-methionine + H2O = L-methionine (S)-S-oxide + [thioredoxin]-dithiol. It catalyses the reaction L-methionyl-[protein] + [thioredoxin]-disulfide + H2O = L-methionyl-(R)-S-oxide-[protein] + [thioredoxin]-dithiol. Its function is as follows. Has an important function as a repair enzyme for proteins that have been inactivated by oxidation. Catalyzes the reversible oxidation-reduction of methionine sulfoxide in proteins to methionine. The polypeptide is Peptide methionine sulfoxide reductase MsrA/MsrB (msrAB) (Streptococcus pyogenes serotype M3 (strain ATCC BAA-595 / MGAS315)).